A 203-amino-acid polypeptide reads, in one-letter code: Large ribosomal subunit protein uL13 (203 aa).

An N-acetylalanine modification is found at alanine 2. A Citrulline modification is found at arginine 59. The residue at position 77 (serine 77) is a Phosphoserine. Arginine 140 is modified (citrulline). At lysine 191 the chain carries N6-acetyllysine.

This sequence belongs to the universal ribosomal protein uL13 family. In terms of assembly, component of the 60S ribosome. Component of the GAIT complex. Interacts with EIF4G1. Phosphorylation at Ser-77 upon interferon-gamma treatment in macrophages involves a DAPK1-DAPK3 kinase cascade and is causing release from the ribosome, association with the GAIT complex and subsequent involvement in transcript-selective translation inhibition. Post-translationally, citrullinated by PADI4.

The protein localises to the cytoplasm. Its function is as follows. Associated with ribosomes but is not required for canonical ribosome function and has extra-ribosomal functions. Component of the GAIT (gamma interferon-activated inhibitor of translation) complex which mediates interferon-gamma-induced transcript-selective translation inhibition in inflammation processes. Upon interferon-gamma activation and subsequent phosphorylation dissociates from the ribosome and assembles into the GAIT complex which binds to stem loop-containing GAIT elements in the 3'-UTR of diverse inflammatory mRNAs (such as ceruplasmin) and suppresses their translation. In the GAIT complex interacts with m7G cap-bound eIF4G at or near the eIF3-binding site and blocks the recruitment of the 43S ribosomal complex. Involved in methylation of rRNA. The chain is Large ribosomal subunit protein uL13 (RPL13A) from Bos taurus (Bovine).